A 440-amino-acid chain; its full sequence is 3-phosphoshikimate 1-carboxyvinyltransferase (440 aa).

The 3-phosphoshikimate site is built by Lys28, Ser29, and Arg33. Lys28 is a binding site for phosphoenolpyruvate. 2 residues coordinate phosphoenolpyruvate: Gly98 and Arg126. Positions 171, 173, 318, and 345 each coordinate 3-phosphoshikimate. Residue Gln173 participates in phosphoenolpyruvate binding. Asp318 functions as the Proton acceptor in the catalytic mechanism. Arg349 and Arg391 together coordinate phosphoenolpyruvate.

Belongs to the EPSP synthase family. As to quaternary structure, monomer.

Its subcellular location is the cytoplasm. It catalyses the reaction 3-phosphoshikimate + phosphoenolpyruvate = 5-O-(1-carboxyvinyl)-3-phosphoshikimate + phosphate. It functions in the pathway metabolic intermediate biosynthesis; chorismate biosynthesis; chorismate from D-erythrose 4-phosphate and phosphoenolpyruvate: step 6/7. Catalyzes the transfer of the enolpyruvyl moiety of phosphoenolpyruvate (PEP) to the 5-hydroxyl of shikimate-3-phosphate (S3P) to produce enolpyruvyl shikimate-3-phosphate and inorganic phosphate. This Anaeromyxobacter dehalogenans (strain 2CP-C) protein is 3-phosphoshikimate 1-carboxyvinyltransferase.